A 112-amino-acid polypeptide reads, in one-letter code: Nucleoid-associated protein lpg2755 (112 aa).

Belongs to the YbaB/EbfC family. Homodimer.

The protein resides in the cytoplasm. The protein localises to the nucleoid. Its function is as follows. Binds to DNA and alters its conformation. May be involved in regulation of gene expression, nucleoid organization and DNA protection. The polypeptide is Nucleoid-associated protein lpg2755 (Legionella pneumophila subsp. pneumophila (strain Philadelphia 1 / ATCC 33152 / DSM 7513)).